Here is a 483-residue protein sequence, read N- to C-terminus: UDP-N-acetylmuramoyl-L-alanyl-D-glutamate--2,6-diaminopimelate ligase (483 aa).

Serine 29 provides a ligand contact to UDP-N-acetyl-alpha-D-muramoyl-L-alanyl-D-glutamate. 112–118 serves as a coordination point for ATP; that stretch reads GTNGKTT. Residues 154 to 155, serine 181, and arginine 189 contribute to the UDP-N-acetyl-alpha-D-muramoyl-L-alanyl-D-glutamate site; that span reads TT. Lysine 221 carries the N6-carboxylysine modification. Residues arginine 380, 404-407, glycine 454, and glutamate 458 each bind meso-2,6-diaminopimelate; that span reads DNPR. The short motif at 404-407 is the Meso-diaminopimelate recognition motif element; sequence DNPR.

It belongs to the MurCDEF family. MurE subfamily. Mg(2+) serves as cofactor. Carboxylation is probably crucial for Mg(2+) binding and, consequently, for the gamma-phosphate positioning of ATP.

The protein resides in the cytoplasm. It carries out the reaction UDP-N-acetyl-alpha-D-muramoyl-L-alanyl-D-glutamate + meso-2,6-diaminopimelate + ATP = UDP-N-acetyl-alpha-D-muramoyl-L-alanyl-gamma-D-glutamyl-meso-2,6-diaminopimelate + ADP + phosphate + H(+). It functions in the pathway cell wall biogenesis; peptidoglycan biosynthesis. Functionally, catalyzes the addition of meso-diaminopimelic acid to the nucleotide precursor UDP-N-acetylmuramoyl-L-alanyl-D-glutamate (UMAG) in the biosynthesis of bacterial cell-wall peptidoglycan. In Clostridium botulinum (strain ATCC 19397 / Type A), this protein is UDP-N-acetylmuramoyl-L-alanyl-D-glutamate--2,6-diaminopimelate ligase.